The primary structure comprises 341 residues: Phosphate acyltransferase (341 aa).

It belongs to the PlsX family. In terms of assembly, homodimer. Probably interacts with PlsY.

The protein localises to the cytoplasm. It carries out the reaction a fatty acyl-[ACP] + phosphate = an acyl phosphate + holo-[ACP]. The protein operates within lipid metabolism; phospholipid metabolism. Functionally, catalyzes the reversible formation of acyl-phosphate (acyl-PO(4)) from acyl-[acyl-carrier-protein] (acyl-ACP). This enzyme utilizes acyl-ACP as fatty acyl donor, but not acyl-CoA. This chain is Phosphate acyltransferase, found in Vibrio campbellii (strain ATCC BAA-1116).